A 208-amino-acid chain; its full sequence is 3-demethoxyubiquinol 3-hydroxylase (208 aa).

Fe cation-binding residues include Glu-57, Glu-87, His-90, Glu-139, Glu-171, and His-174.

Belongs to the COQ7 family. Fe cation serves as cofactor.

Its subcellular location is the cell membrane. It carries out the reaction a 5-methoxy-2-methyl-3-(all-trans-polyprenyl)benzene-1,4-diol + AH2 + O2 = a 3-demethylubiquinol + A + H2O. It participates in cofactor biosynthesis; ubiquinone biosynthesis. In terms of biological role, catalyzes the hydroxylation of 2-nonaprenyl-3-methyl-6-methoxy-1,4-benzoquinol during ubiquinone biosynthesis. The protein is 3-demethoxyubiquinol 3-hydroxylase of Burkholderia lata (strain ATCC 17760 / DSM 23089 / LMG 22485 / NCIMB 9086 / R18194 / 383).